A 252-amino-acid polypeptide reads, in one-letter code: 5-oxoprolinase subunit A (252 aa).

This sequence belongs to the LamB/PxpA family. As to quaternary structure, forms a complex composed of PxpA, PxpB and PxpC.

It catalyses the reaction 5-oxo-L-proline + ATP + 2 H2O = L-glutamate + ADP + phosphate + H(+). In terms of biological role, catalyzes the cleavage of 5-oxoproline to form L-glutamate coupled to the hydrolysis of ATP to ADP and inorganic phosphate. The sequence is that of 5-oxoprolinase subunit A from Mycobacterium ulcerans (strain Agy99).